Here is a 387-residue protein sequence, read N- to C-terminus: 3-ketoacyl-CoA thiolase (387 aa).

Catalysis depends on C91, which acts as the Acyl-thioester intermediate. Catalysis depends on proton acceptor residues H343 and C373.

Belongs to the thiolase-like superfamily. Thiolase family. Heterotetramer of two alpha chains (FadB) and two beta chains (FadA).

It localises to the cytoplasm. It carries out the reaction an acyl-CoA + acetyl-CoA = a 3-oxoacyl-CoA + CoA. Its pathway is lipid metabolism; fatty acid beta-oxidation. Catalyzes the final step of fatty acid oxidation in which acetyl-CoA is released and the CoA ester of a fatty acid two carbons shorter is formed. In Shewanella loihica (strain ATCC BAA-1088 / PV-4), this protein is 3-ketoacyl-CoA thiolase.